A 540-amino-acid chain; its full sequence is Probable protein kinase UbiB (540 aa).

A helical membrane pass occupies residues 24–44 (LLFDQPLLPWWLASLRLLMPW). The Protein kinase domain occupies 126-494 (RFDVEPLASA…RRRQGDRWAL (369 aa)). ATP is bound by residues 132–140 (LASASVAQV) and Lys-154. Catalysis depends on Asp-289, which acts as the Proton acceptor. The next 2 helical transmembrane spans lie at 496–516 (LLGA…AETA) and 518–538 (LAAP…YLIV).

This sequence belongs to the ABC1 family. UbiB subfamily.

The protein localises to the cell inner membrane. Its pathway is cofactor biosynthesis; ubiquinone biosynthesis [regulation]. Functionally, is probably a protein kinase regulator of UbiI activity which is involved in aerobic coenzyme Q (ubiquinone) biosynthesis. This chain is Probable protein kinase UbiB, found in Pseudomonas putida (strain ATCC 700007 / DSM 6899 / JCM 31910 / BCRC 17059 / LMG 24140 / F1).